Consider the following 318-residue polypeptide: Electron transfer flavoprotein subunit alpha (318 aa).

Residue 257 to 285 (LYIALGISGAIQHRAGMQTSKTIVAVNKD) coordinates FAD.

The protein belongs to the ETF alpha-subunit/FixB family. In terms of assembly, heterodimer of an alpha and a beta subunit. FAD serves as cofactor.

Functionally, the electron transfer flavoprotein serves as a specific electron acceptor for other dehydrogenases. It transfers the electrons to the main respiratory chain via ETF-ubiquinone oxidoreductase (ETF dehydrogenase). This Mycobacterium leprae (strain TN) protein is Electron transfer flavoprotein subunit alpha (etfA).